The following is a 250-amino-acid chain: Ribosomal RNA small subunit methyltransferase J (250 aa).

Residues 101–102, 117–118, 153–154, and Asp-171 contribute to the S-adenosyl-L-methionine site; these read RD, ER, and SS.

This sequence belongs to the methyltransferase superfamily. RsmJ family.

It localises to the cytoplasm. The catalysed reaction is guanosine(1516) in 16S rRNA + S-adenosyl-L-methionine = N(2)-methylguanosine(1516) in 16S rRNA + S-adenosyl-L-homocysteine + H(+). Specifically methylates the guanosine in position 1516 of 16S rRNA. The protein is Ribosomal RNA small subunit methyltransferase J of Escherichia coli (strain UTI89 / UPEC).